Consider the following 186-residue polypeptide: Cell division protein ZapC (186 aa).

It belongs to the ZapC family. In terms of assembly, interacts directly with FtsZ.

It localises to the cytoplasm. Functionally, contributes to the efficiency of the cell division process by stabilizing the polymeric form of the cell division protein FtsZ. Acts by promoting interactions between FtsZ protofilaments and suppressing the GTPase activity of FtsZ. In Musicola paradisiaca (strain Ech703) (Dickeya paradisiaca), this protein is Cell division protein ZapC.